A 906-amino-acid polypeptide reads, in one-letter code: Rho GTPase-activating protein gacJ (906 aa).

The segment at 53 to 117 (LEGHLNPSSH…RDNSRSDNIR (65 aa)) is disordered. Low complexity predominate over residues 69-79 (NNNNNNNNNNN). Over residues 92–117 (SRSDSKHHNRENSKSDRDNSRSDNIR) the composition is skewed to basic and acidic residues. One can recognise a Rho-GAP domain in the interval 161 to 348 (EELQSLYPDQ…YMLEYFNDIF (188 aa)). Disordered regions lie at residues 368–415 (DTTS…SRSK), 452–864 (EIIP…SVLT), and 877–906 (ANQA…NINK). Residues 381–404 (NGGSPRTSNTPYQQQHQLSSQSMA) show a composition bias toward polar residues. Positions 461–487 (TTTTTTTTTNTTTTTTTTNTTPNNTTT) are enriched in low complexity. Pro residues-rich tracts occupy residues 494–510 (PVPP…PPNP) and 547–560 (QPPP…PSPP). Residues 565–574 (KPTSKSDFIP) show a composition bias toward polar residues. Composition is skewed to low complexity over residues 575–597 (STNN…SIPK) and 613–629 (IEEP…TTTT). Positions 637 to 649 (FKNNGTISSGSKS) are enriched in polar residues. Composition is skewed to low complexity over residues 650–663 (NPNL…NQPL) and 683–694 (SKPITTTPTIKK). Positions 708 to 721 (PPSPSSSSPSPPHN) are enriched in pro residues. Composition is skewed to low complexity over residues 754 to 772 (PTIP…PTTP), 785 to 816 (PPIN…STPK), and 844 to 861 (SSPT…SSPS). Polar residues predominate over residues 880 to 890 (AKKNPLSNSGG).

Its subcellular location is the cytoplasm. Rho GTPase-activating protein involved in the signal transduction pathway. The polypeptide is Rho GTPase-activating protein gacJ (gacJ) (Dictyostelium discoideum (Social amoeba)).